The primary structure comprises 511 residues: TNF receptor-associated factor family protein DDB_G0290931 (511 aa).

An RING-type; degenerate zinc finger spans residues 27–67; it reads CPICFELIYKKSIYQCSSGHYACQECWEKSLEIKQECMICR. Residues 103–169 adopt a coiled-coil conformation; sequence IDGANQENED…RKLIKDEENG (67 aa). Residues 107–159 are disordered; that stretch reads NQENEDEENEDEENEDDEDENEDEENGEDDEDKDEDEENENENEENKDEENEK. Over residues 109–155 the composition is skewed to acidic residues; the sequence is ENEDEENEDEENEDDEDENEDEENGEDDEDKDEDEENENENEENKDE. 2 TRAF-type zinc fingers span residues 181–234 and 236–293; these read RHIQ…QVQL and NHYD…SELQ. A coiled-coil region spans residues 324–358; the sequence is ELLLKEIEKSKITCSELQRKNDELSSLITEIDDNY. An MATH domain is found at 374 to 499; sequence GYTNKWIISN…DDKLTINIYV (126 aa).

Belongs to the TNF receptor-associated factor family. A subfamily.

It is found in the cytoplasm. In terms of biological role, probable adapter protein and signal transducer that links members of the tumor necrosis factor receptor family to different signaling pathways by association with the receptor cytoplasmic domain and kinases. This is TNF receptor-associated factor family protein DDB_G0290931 from Dictyostelium discoideum (Social amoeba).